The primary structure comprises 77 residues: Large ribosomal subunit protein bL28 (77 aa).

This sequence belongs to the bacterial ribosomal protein bL28 family.

This Polynucleobacter necessarius subsp. necessarius (strain STIR1) protein is Large ribosomal subunit protein bL28.